A 995-amino-acid polypeptide reads, in one-letter code: Translation initiation factor IF-2 (995 aa).

The interval 53–399 (NNAGSPAPAA…SGAPRGQGQV (347 aa)) is disordered. Pro residues-rich tracts occupy residues 60–87 (PAAP…PPGG) and 104–119 (TPGP…PPQS). Residues 135-160 (AAAEARAAALKAEQEAAVKAAQAARQ) are compositionally biased toward low complexity. Positions 161-171 (QQRENVRREPP) are enriched in basic and acidic residues. Over residues 177-192 (RPGPRPGPGTMPPRPG) the composition is skewed to pro residues. Residues 193–202 (SPAAGRSGAP) show a composition bias toward low complexity. 2 stretches are compositionally biased toward pro residues: residues 203–213 (APGPGPRPGGR) and 242–264 (RPSP…PSPA). The span at 273-363 (RPGGPGSGRP…GAAGAFGRPG (91 aa)) shows a compositional bias: gly residues. Residues 367–376 (TRGRKSKKQR) show a composition bias toward basic residues. In terms of domain architecture, tr-type G spans 486-658 (SRPPVVTVMG…VLLTADASLE (173 aa)). The segment at 495-502 (GHVDHGKT) is G1. 495-502 (GHVDHGKT) serves as a coordination point for GTP. The interval 520 to 524 (GITQH) is G2. The segment at 545 to 548 (DTPG) is G3. GTP-binding positions include 545 to 549 (DTPGH) and 599 to 602 (NKID). The G4 stretch occupies residues 599–602 (NKID). The tract at residues 635 to 637 (AAK) is G5.

It belongs to the TRAFAC class translation factor GTPase superfamily. Classic translation factor GTPase family. IF-2 subfamily.

The protein resides in the cytoplasm. Its function is as follows. One of the essential components for the initiation of protein synthesis. Protects formylmethionyl-tRNA from spontaneous hydrolysis and promotes its binding to the 30S ribosomal subunits. Also involved in the hydrolysis of GTP during the formation of the 70S ribosomal complex. The polypeptide is Translation initiation factor IF-2 (Salinispora arenicola (strain CNS-205)).